A 413-amino-acid chain; its full sequence is Ras association domain-containing protein 5 (413 aa).

A disordered region spans residues 1–103 (MASPAIGQRP…RPRDVRSIFE (103 aa)). A compositionally biased stretch (basic and acidic residues) spans 52–74 (SEDRGGRRSGRRDPEPTPRDCRH). The segment at 117–165 (GHRFVELALRGGPGWCDLCGREVLRQALRCANCKFTCHSECRSLIQLDC) adopts a Phorbol-ester/DAG-type zinc-finger fold. 2 positions are modified to phosphoserine: Ser177 and Ser274. The region spanning 265-359 (PAATTDKRTS…LSFVLKENET (95 aa)) is the Ras-associating domain. Residue Thr347 is modified to Phosphothreonine. The region spanning 361-408 (EVEWDAFSIPELQNFLTILEKEEQDKIHQLQKKYNKFRQKLEEALRES) is the SARAH domain.

In terms of assembly, interacts directly with activated HRAS; a RASSF5-STK4/MST1 complex probably associates with activated HRAS. Interacts with KRAS. Probably interacts with Ras-like GTPases RRAS, MRAS, RAP1B, RAP2A and RALA. Interacts with RRAS2. Can self-associate. Interacts with RSSF1 isoform A. The RSSF1 isoform A-RSSF5 heterodimer probably mediates the association of RSSF1 with HRAS. Isoform 2 interacts with activated RAP1A and ITGAL/LFA-1. Binds STK4/MST1, inhibiting STK4/MST1 autoactivation.

It localises to the cytoplasm. The protein resides in the cytoskeleton. Functionally, potential tumor suppressor. Seems to be involved in lymphocyte adhesion by linking RAP1A activation upon T-cell receptor or chemokine stimulation to integrin activation. Isoform 2 stimulates lymphocyte polarization and the patch-like distribution of ITGAL/LFA-1, resulting in an enhanced adhesion to ICAM1. Together with RAP1A may participate in regulation of microtubule growth. The association of isoform 2 with activated RAP1A is required for directional movement of endothelial cells during wound healing. May be involved in regulation of Ras apoptotic function. The RASSF5-STK4/MST1 complex may mediate HRAS and KRAS induced apoptosis. The sequence is that of Ras association domain-containing protein 5 (Rassf5) from Mus musculus (Mouse).